We begin with the raw amino-acid sequence, 407 residues long: MDGLPGRALGAACLLLLAAGWLGPEAWGSPTPPPSPAAPPPPPPPGALGGSQDTCTSCGGFRRPEELGRLDGDFLEAVKRHILNRLQMRGRPNITHAVPKAAMVTALRKLHAGKVREDGRVEIPHLDGHASPGADGQERVSEIISFAETDGLASSRVRLYFFISNEGNQNLFVVQASLWLYLKLLPYVLEKGSRRKVRVKVYFQEPGHGDRWDVVEKRVDLKRSGWHTLPLTEAIQALFERGERRLNLDVQCDGCQELAVVPVFVDPGEESHRPFVVVQARLVDSRHRIRKRGLECDGRTNLCCRQQFFIDFRLIGWSDWIIAPTGYYGNYCEGSCPAYLAGVPGSASSFHTAVVNQYRMRGLNPGTVNSCCIPTKLSTMSMLYFDDEYNIVKRDVPNMIVEECGCA.

Positions 1 to 28 (MDGLPGRALGAACLLLLAAGWLGPEAWG) are cleaved as a signal peptide. Positions 27–60 (WGSPTPPPSPAAPPPPPPPGALGGSQDTCTSCGG) are disordered. A propeptide spanning residues 29–292 (SPTPPPSPAA…VDSRHRIRKR (264 aa)) is cleaved from the precursor. Over residues 30-46 (PTPPPSPAAPPPPPPPG) the composition is skewed to pro residues. N93 carries N-linked (GlcNAc...) asparagine glycosylation. Intrachain disulfides connect C296-C304, C303-C372, C332-C404, and C336-C406.

The protein belongs to the TGF-beta family. In terms of assembly, dimeric, linked by one or more disulfide bonds. Inhibin B is a dimer of alpha and beta-B. Activin B is a homodimer of beta-B. Activin AB is a dimer of beta-A and beta-B. Interacts with FST and FSTL3.

The protein resides in the secreted. Functionally, inhibins and activins inhibit and activate, respectively, the secretion of follitropin by the pituitary gland. Inhibins/activins are involved in regulating a number of diverse functions such as hypothalamic and pituitary hormone secretion, gonadal hormone secretion, germ cell development and maturation, erythroid differentiation, insulin secretion, nerve cell survival, embryonic axial development or bone growth, depending on their subunit composition. Inhibins appear to oppose the functions of activins. Its function is as follows. Activin B is a dimer of alpha and beta-B that plays a role in several essential biological processes including embryonic development, stem cell maintenance and differentiation, haematopoiesis, cell proliferation and wound healing. Signals through type I receptor ACVR1C, abundantly expressed in pancreatic beta cells, and type II receptors like ACVR2A. Upon ligand binding, these receptors phosphorylate intracellular signaling mediators SMAD2 and SMAD3, which form a complex with SMAD4, translocate to the nucleus, and regulate gene expression. Plays a crucial role in the induction of hepcidin by inflammation through activation of ACVR1C and subsequent phosphorylation of SMAD1/5/8. Regulates adipocyte lipid metabolism by decreasing non-esterified fatty acids and glycerol release and increases intracellular triglyceride content. Stimulates wound healing by promoting cell migration and hair follicle regeneration through the JNK and ERK signaling pathways downstream of RHOA. In terms of biological role, inhibin B is a dimer of alpha and beta-B that plays a crucial role in the regulation of the reproductive system by inhibiting the secretion of follicle-stimulating hormone (FSH) from the anterior pituitary gland. Thereby, maintains reproductive homeostasis in both males and females. Acts as a more potent suppressor of FSH release than inhibin A. Functions as competitive receptor antagonist binding activin type II receptors with high affinity in the presence of the TGF-beta type III coreceptor/TGFBR3L. This Sus scrofa (Pig) protein is Inhibin beta B chain (INHBB).